Reading from the N-terminus, the 185-residue chain is Lipid A acyltransferase PagP (185 aa).

The first 14 residues, 1-14, serve as a signal peptide directing secretion; it reads MKLKPVLYLLMLLG. The N-palmitoyl cysteine moiety is linked to residue C15. C15 carries the S-diacylglycerol cysteine lipid modification. Residues H57, D100, and S101 contribute to the active site.

Belongs to the lipid A palmitoyltransferase family. Homodimer.

It localises to the cell outer membrane. It carries out the reaction a lipid A + a 1,2-diacyl-sn-glycero-3-phosphocholine = a hepta-acyl lipid A + a 2-acyl-sn-glycero-3-phosphocholine. It catalyses the reaction a lipid IVA + a 1,2-diacyl-sn-glycero-3-phosphocholine = a lipid IVB + a 2-acyl-sn-glycero-3-phosphocholine. The enzyme catalyses a lipid IIA + a 1,2-diacyl-sn-glycero-3-phosphocholine = a lipid IIB + a 2-acyl-sn-glycero-3-phosphocholine. Its function is as follows. Transfers a fatty acid residue from the sn-1 position of a phospholipid to the N-linked hydroxyfatty acid chain on the proximal unit of lipid A or its precursors. The protein is Lipid A acyltransferase PagP of Erwinia pyrifoliae (strain DSM 12163 / CIP 106111 / Ep16/96).